The primary structure comprises 1023 residues: Lon protease homolog (1023 aa).

515–522 (GPPGVGKT) serves as a coordination point for ATP. The Lon proteolytic domain maps to 810–1003 (TNMIGVINGL…IEIITDPNVI (194 aa)). Residue Ser-906 is part of the active site.

The protein belongs to the peptidase S16 family.

In Acanthamoeba polyphaga (Amoeba), this protein is Lon protease homolog.